The primary structure comprises 236 residues: Phospholipid hydroperoxide glutathione peroxidase 1, chloroplastic (236 aa).

Over residues 1-16 (MVSMTTSSSSYGTFST) the composition is skewed to low complexity. Residues 1–24 (MVSMTTSSSSYGTFSTVVNSSRPN) form a disordered region. The N-terminal 64 residues, 1–64 (MVSMTTSSSS…PINPGFLFKS (64 aa)), are a transit peptide targeting the chloroplast. Cys-111 is a catalytic residue.

It belongs to the glutathione peroxidase family. As to expression, expressed in leaves, stems, flowers, green siliques and seeds.

It is found in the plastid. The protein localises to the chloroplast. The catalysed reaction is a hydroperoxy polyunsaturated fatty acid + 2 glutathione = a hydroxy polyunsaturated fatty acid + glutathione disulfide + H2O. Its function is as follows. Protects cells and enzymes from oxidative damage, by catalyzing the reduction of hydrogen peroxide, lipid peroxides and organic hydroperoxide, by glutathione. The polypeptide is Phospholipid hydroperoxide glutathione peroxidase 1, chloroplastic (GPX1) (Arabidopsis thaliana (Mouse-ear cress)).